Here is a 60-residue protein sequence, read N- to C-terminus: Large ribosomal subunit protein bL32 (60 aa).

Residues 1 to 47 (MAVQQNRKTRSKRGMRRSHDALTSSTLSTDPTTGEKHRRHHVTADGF) are disordered. Basic residues predominate over residues 7-16 (RKTRSKRGMR).

It belongs to the bacterial ribosomal protein bL32 family.

This chain is Large ribosomal subunit protein bL32, found in Teredinibacter turnerae (strain ATCC 39867 / T7901).